A 443-amino-acid polypeptide reads, in one-letter code: Putative phosphoribosyl transferase MT0597 (443 aa).

The protein in the N-terminal section; belongs to the purine/pyrimidine phosphoribosyltransferase family. It in the C-terminal section; belongs to the dienelactone hydrolase family.

This chain is Putative phosphoribosyl transferase MT0597, found in Mycobacterium tuberculosis (strain CDC 1551 / Oshkosh).